We begin with the raw amino-acid sequence, 372 residues long: 3-galactosyl-N-acetylglucosaminide 4-alpha-L-fucosyltransferase FUT3 (372 aa).

At 1 to 15 (MDPLGAAKPQWPWRR) the chain is on the cytoplasmic side. Residues 16 to 34 (CLAALLFQLLVAVCFFSYL) form a helical; Signal-anchor for type II membrane protein membrane-spanning segment. Topologically, residues 35–372 (RVSRDDATGS…TMRSIAAWFT (338 aa)) are lumenal. Residues 40 to 69 (DATGSPRPGLMAVEPVTGAPSGSSRQDTTP) form a disordered region. Asn-165 and Asn-196 each carry an N-linked (GlcNAc...) asparagine glycan.

This sequence belongs to the glycosyltransferase 10 family. Glycosylated.

It is found in the golgi apparatus. Its subcellular location is the golgi stack membrane. The enzyme catalyses a beta-D-galactosyl-(1-&gt;3)-N-acetyl-beta-D-glucosaminyl derivative + GDP-beta-L-fucose = a beta-D-galactosyl-(1-&gt;3)-[alpha-L-fucosyl-(1-&gt;4)]-N-acetyl-beta-D-glucosaminyl derivative + GDP + H(+). It carries out the reaction an N-acetyl-alpha-neuraminyl-(2-&gt;3)-beta-D-galactosyl-(1-&gt;4)-N-acetyl-beta-D-glucosaminyl derivative + GDP-beta-L-fucose = an alpha-Neu5Ac-(2-&gt;3)-beta-D-Gal-(1-&gt;4)-[alpha-L-Fuc-(1-&gt;3)]-beta-D-GlcNAc derivative + GDP + H(+). It catalyses the reaction a beta-D-galactosyl-(1-&gt;4)-N-acetyl-beta-D-glucosaminyl derivative + GDP-beta-L-fucose = a beta-D-galactosyl-(1-&gt;4)-[alpha-L-fucosyl-(1-&gt;3)]-N-acetyl-beta-D-glucosaminyl derivative + GDP + H(+). The catalysed reaction is an alpha-Neu5Ac-(2-&gt;3)-beta-D-Gal-(1-&gt;4)-beta-D-GlcNAc-(1-&gt;3)-beta-D-Gal-(1-&gt;4)-[alpha-L-Fuc-(1-&gt;3)]-beta-D-GlcNAc derivative + GDP-beta-L-fucose = an alpha-Neu5Ac-(2-&gt;3)-beta-D-Gal-(1-&gt;4)-[alpha-L-Fuc-(1-&gt;3)]-beta-D-GlcNAc-(1-&gt;3)-beta-D-Gal-(1-&gt;4)-[alpha-L-Fuc-(1-&gt;3)]-beta-D-GlcNAc derivative + GDP + H(+). The enzyme catalyses Lc4Cer + GDP-beta-L-fucose = a lactoside III(4)-a-Fuc-Lc4Cer + GDP + H(+). It carries out the reaction a beta-D-Gal-(1-&gt;3)-beta-D-GlcNAc-(1-&gt;3)-beta-D-Gal-(1-&gt;4)-beta-D-Glc-(1&lt;-&gt;1')-Cer(d18:1(4E)) + GDP-beta-L-fucose = a III(4)-a-Fuc-Lc4Cer(d18:1(4E)) + GDP + H(+). It catalyses the reaction N-acetyl-alpha-neuraminosyl-(2-&gt;3)-beta-D-galactosyl-(1-&gt;3)-[N-acetyl-alpha-neuraminosyl-(2-&gt;6)]-N-acetyl-beta-D-glucosaminyl-(1-&gt;3)-beta-D-galactosyl-(1-&gt;4)-beta-D-glucosyl-(1&lt;-&gt;1')-N-acyl-sphing-4-enine + GDP-beta-L-fucose = N-acetyl-alpha-neuraminosyl-(2-&gt;3)-beta-D-galactosyl-(1-&gt;3)-alpha-L-fucosyl-(1-&gt;4)-[N-acetyl-alpha-neuraminosyl-(2-&gt;6)-N-acetyl-beta-D-glucosaminyl-(1-&gt;3)]-beta-D-galactosyl-(1-&gt;4)-beta-D-glucosyl-(1&lt;-&gt;1')-N-acyl-sphing-4-enine + GDP + H(+). The catalysed reaction is N-acetyl-alpha-neuraminosyl-(2-&gt;3)-beta-D-galactosyl-(1-&gt;3)-N-acetyl-beta-D-glucosaminyl-(1-&gt;3)-beta-D-galactosyl-(1-&gt;4)-beta-D-glucosyl-(1&lt;-&gt;1')-N-acyl-sphing-4-enine + GDP-beta-L-fucose = N-acetyl-alpha-neuraminosyl-(2-&gt;3)-beta-D-galactosyl-(1-&gt;3)-alpha-L-fucosyl-(1-&gt;4)-[N-acetyl-beta-D-glucosaminyl-(1-&gt;3)]-beta-D-galactosyl-(1-&gt;4)-beta-D-glucosyl-(1&lt;-&gt;1')-N-acyl-sphing-4-enine + GDP + H(+). The enzyme catalyses beta-D-galactosyl-(1-&gt;3)-N-acetyl-D-glucosamine + GDP-beta-L-fucose = beta-D-galactosyl-(1-&gt;3)-[alpha-L-fucosyl-(1-&gt;4)]-N-acetyl-D-glucosamine + GDP + H(+). It carries out the reaction alpha-L-Fuc-(1-&gt;2)-beta-D-Gal-(1-&gt;3)-D-GlcNAc + GDP-beta-L-fucose = alpha-L-Fuc-(1-&gt;2)-beta-D-Gal-(1-&gt;3)-[alpha-L-Fuc-(1-&gt;4)]-D-GlcNAc + GDP + H(+). It catalyses the reaction alpha-L-Fuc-(1-&gt;2)-beta-D-Gal-(1-&gt;4)-D-GlcNAc + GDP-beta-L-fucose = alpha-L-Fuc-(1-&gt;2)-beta-D-Gal-(1-&gt;4)-[alpha-L-Fuc-(1-&gt;3)]-D-GlcNAc + GDP + H(+). The catalysed reaction is beta-D-galactosyl-(1-&gt;4)-N-acetyl-D-glucosamine + GDP-beta-L-fucose = beta-D-galactosyl-(1-&gt;4)-[alpha-L-fucosyl-(1-&gt;3)]-N-acetyl-D-glucosamine + GDP + H(+). The enzyme catalyses lactose + GDP-beta-L-fucose = beta-D-galactosyl-(1-&gt;4)-[alpha-L-fucosyl-(1-&gt;3)]-D-glucose + GDP + H(+). It carries out the reaction an alpha-Neu5Ac-(2-&gt;3)-beta-D-Gal-(1-&gt;3)-D-GlcNAc derivative + GDP-beta-L-fucose = an alpha-Neu5Ac-(2-&gt;3)-beta-D-Gal-(1-&gt;3)-[alpha-L-Fuc-(1-&gt;4)]-beta-D-GlcNAc derivative + GDP + H(+). The protein operates within protein modification; protein glycosylation. Catalyzes the transfer of L-fucose, from a guanosine diphosphate-beta-L-fucose, to both the subterminal N-acetyl glucosamine (GlcNAc) of type 1 chain (beta-D-Gal-(1-&gt;3)-beta-D-GlcNAc) glycolipids and oligosaccharides via an alpha(1,4) linkage, and the subterminal glucose (Glc) or GlcNAc of type 2 chain (beta-D-Gal-(1-&gt;4)-beta-D-GlcNAc) oligosaccharides via an alpha(1,3) linkage, independently of the presence of terminal alpha-L-fucosyl-(1,2) moieties on the terminal galactose of these acceptors and participates in the blood groups Lewis determination and expression of Lewis a (Le(a)), lewis b (Le(b)), Lewis x/SSEA-1 (Le(x)) and lewis y (Le(y)) antigens. Also catalyzes the transfer of L-fucose to subterminal GlcNAc of sialyl- and disialyl-lactotetraosylceramide to produce sialyl Lewis a (sLe(a)) and disialyl Lewis a via an alpha(1,4) linkage and therefore may regulate cell surface sialyl Lewis a expression and consequently regulates adhesive properties to E-selectin, cell proliferation and migration. Catalyzes the transfer of an L-fucose to 3'-sialyl-N-acetyllactosamine by an alpha(1,3) linkage, which allows the formation of sialyl-Lewis x structure and therefore may regulate the sialyl-Lewis x surface antigen expression and consequently adhesive properties to E-selectin. Prefers type 1 chain over type 2 acceptors. Type 1 tetrasaccharide is a better acceptor than type 1 disaccharide suggesting that a beta anomeric configuration of GlcNAc in the substrate is preferred. Lewis-positive (Le(+)) individuals have an active enzyme while Lewis-negative (Le(-)) individuals have an inactive enzyme. This Pan troglodytes (Chimpanzee) protein is 3-galactosyl-N-acetylglucosaminide 4-alpha-L-fucosyltransferase FUT3.